Here is a 383-residue protein sequence, read N- to C-terminus: Putative glutamate--cysteine ligase 2 (383 aa).

This sequence belongs to the glutamate--cysteine ligase type 2 family. YbdK subfamily.

It catalyses the reaction L-cysteine + L-glutamate + ATP = gamma-L-glutamyl-L-cysteine + ADP + phosphate + H(+). Functionally, ATP-dependent carboxylate-amine ligase which exhibits weak glutamate--cysteine ligase activity. This is Putative glutamate--cysteine ligase 2 from Legionella pneumophila subsp. pneumophila (strain Philadelphia 1 / ATCC 33152 / DSM 7513).